Consider the following 144-residue polypeptide: Large ribosomal subunit protein uL15 (144 aa).

The segment at 1 to 59 is disordered; sequence MHLNTLAPAPGAKKSSKRVGRGMGSGLGKTGGRGHKGQKSRSGGSVKPGFEGGQMPIQR. Gly residues predominate over residues 21–31; that stretch reads RGMGSGLGKTG.

The protein belongs to the universal ribosomal protein uL15 family. In terms of assembly, part of the 50S ribosomal subunit.

Functionally, binds to the 23S rRNA. This is Large ribosomal subunit protein uL15 from Pseudoalteromonas atlantica (strain T6c / ATCC BAA-1087).